Reading from the N-terminus, the 402-residue chain is APO protein 3, mitochondrial (402 aa).

A mitochondrion-targeting transit peptide spans 1-13 (MQRRKLVEISIFV). Positions 37-59 (NDEDPLYADVPKPPKDKSERKPY) are disordered. Positions 48-58 (KPPKDKSERKP) are enriched in basic and acidic residues. 2 APO domains span residues 127-213 (RCRL…DLEK) and 294-380 (TCGY…PVPD).

The protein belongs to the APO family.

It is found in the mitochondrion. Functionally, may be involved in the stable assembly of several 4Fe-4S cluster-containing complexes of mitochondria. The protein is APO protein 3, mitochondrial (APO3) of Arabidopsis thaliana (Mouse-ear cress).